The following is a 261-amino-acid chain: Tryptophan synthase alpha chain (261 aa).

Catalysis depends on proton acceptor residues Glu-49 and Asp-60.

It belongs to the TrpA family. Tetramer of two alpha and two beta chains.

The catalysed reaction is (1S,2R)-1-C-(indol-3-yl)glycerol 3-phosphate + L-serine = D-glyceraldehyde 3-phosphate + L-tryptophan + H2O. It functions in the pathway amino-acid biosynthesis; L-tryptophan biosynthesis; L-tryptophan from chorismate: step 5/5. Its function is as follows. The alpha subunit is responsible for the aldol cleavage of indoleglycerol phosphate to indole and glyceraldehyde 3-phosphate. In Roseiflexus sp. (strain RS-1), this protein is Tryptophan synthase alpha chain.